The primary structure comprises 419 residues: DNA primase DnaG (419 aa).

In terms of domain architecture, Toprim spans D168–E244. Residues E174, D218, and D220 each contribute to the Mg(2+) site. Basic and acidic residues-rich tracts occupy residues K280–E291 and K306–P316. The tract at residues K280–T317 is disordered.

It belongs to the archaeal DnaG primase family. Forms a ternary complex with MCM helicase and DNA. Component of the archaeal exosome complex. The cofactor is Mg(2+).

It catalyses the reaction ssDNA + n NTP = ssDNA/pppN(pN)n-1 hybrid + (n-1) diphosphate.. Its function is as follows. RNA polymerase that catalyzes the synthesis of short RNA molecules used as primers for DNA polymerase during DNA replication. Also part of the exosome, which is a complex involved in RNA degradation. Acts as a poly(A)-binding protein that enhances the interaction between heteromeric, adenine-rich transcripts and the exosome. This Aeropyrum pernix (strain ATCC 700893 / DSM 11879 / JCM 9820 / NBRC 100138 / K1) protein is DNA primase DnaG.